Reading from the N-terminus, the 349-residue chain is MFRKLLKMWILLRPTHWLILIALCAVTCAGYWLLWSEIRLEHAFKPLSKLGDSLSPDQHASSTTDDFDFEEHLVVLYNRVPKTGSTSFVNIAYDLCKPNKFHVLHINVTANMHVLSLPNQIQFVRNVSRWHEMKPALYHGHMAFLDFSKFQIAHKPIYINLVRKPLDRLVSYYYFLRFGDNYRPNLVRKKAGNKITFDECVVQKQPDCDPKNMWLQIPFFCGHAAECWEPGSSWALDQAKRNLVNEYFLVGVTEQMYEFVDLLERSLPRIFHGFREHYHNSNKSHLRVTSSKLPPSESTIKSIQKTKIWQMENDLYDFALAQFEFNKKKLMQPDNKHVQKFMYEKIRPK.

The Cytoplasmic portion of the chain corresponds to 1 to 17 (MFRKLLKMWILLRPTHW). The chain crosses the membrane as a helical; Signal-anchor for type II membrane protein span at residues 18-38 (LILIALCAVTCAGYWLLWSEI). Over 39–349 (RLEHAFKPLS…KFMYEKIRPK (311 aa)) the chain is Lumenal. N-linked (GlcNAc...) asparagine glycans are attached at residues asparagine 107 and asparagine 126. Residues histidine 139 and histidine 141 contribute to the active site. Cystine bridges form between cysteine 200–cysteine 208 and cysteine 221–cysteine 227. N-linked (GlcNAc...) asparagine glycosylation occurs at asparagine 282.

It belongs to the sulfotransferase 3 family. In terms of assembly, homotrimer.

Its subcellular location is the golgi apparatus membrane. Catalyzes the transfer of sulfate to the C2-position of selected hexuronic acid residues within the maturing heparan sulfate (HS). This is Heparin sulfate O-sulfotransferase from Drosophila melanogaster (Fruit fly).